Consider the following 341-residue polypeptide: Ribosomal RNA small subunit methyltransferase H (341 aa).

S-adenosyl-L-methionine-binding positions include Gly-47–Tyr-49, Asp-64, Phe-91, Asp-109, and Gln-116.

It belongs to the methyltransferase superfamily. RsmH family.

It localises to the cytoplasm. The enzyme catalyses cytidine(1402) in 16S rRNA + S-adenosyl-L-methionine = N(4)-methylcytidine(1402) in 16S rRNA + S-adenosyl-L-homocysteine + H(+). Functionally, specifically methylates the N4 position of cytidine in position 1402 (C1402) of 16S rRNA. This is Ribosomal RNA small subunit methyltransferase H from Rhizobium leguminosarum bv. trifolii (strain WSM1325).